Reading from the N-terminus, the 389-residue chain is Phospho-N-acetylmuramoyl-pentapeptide-transferase (389 aa).

10 helical membrane-spanning segments follow: residues 25 to 45, 73 to 93, 97 to 117, 135 to 155, 190 to 210, 222 to 242, 258 to 278, 286 to 306, 311 to 331, and 366 to 386; these read RAVM…PWVI, TMGG…WGDL, FIWI…VDDY, FWQS…VSEA, ISYP…IVGA, GLVI…AYVM, GAGE…AFLW, VFMG…VAVI, IVLF…MLQV, and QVVV…LTTL.

The protein belongs to the glycosyltransferase 4 family. MraY subfamily. The cofactor is Mg(2+).

Its subcellular location is the cell inner membrane. The catalysed reaction is UDP-N-acetyl-alpha-D-muramoyl-L-alanyl-gamma-D-glutamyl-meso-2,6-diaminopimeloyl-D-alanyl-D-alanine + di-trans,octa-cis-undecaprenyl phosphate = di-trans,octa-cis-undecaprenyl diphospho-N-acetyl-alpha-D-muramoyl-L-alanyl-D-glutamyl-meso-2,6-diaminopimeloyl-D-alanyl-D-alanine + UMP. The protein operates within cell wall biogenesis; peptidoglycan biosynthesis. Functionally, catalyzes the initial step of the lipid cycle reactions in the biosynthesis of the cell wall peptidoglycan: transfers peptidoglycan precursor phospho-MurNAc-pentapeptide from UDP-MurNAc-pentapeptide onto the lipid carrier undecaprenyl phosphate, yielding undecaprenyl-pyrophosphoryl-MurNAc-pentapeptide, known as lipid I. This Burkholderia cenocepacia (strain HI2424) protein is Phospho-N-acetylmuramoyl-pentapeptide-transferase.